The following is a 523-amino-acid chain: MTVSQLLKQRVRYAPYLSKVRRAEELLPLFKHGQYIGWSGFTGVGAPKVIPTALADHVEKNGLQGQLAFNLFVGASAGPEENRWADLDMILRRAPHQVGKPIARAINDGRIKFFDKHLSMFPQDLTYGYYTRERTDGKILDYAIVEATAIKEDGSIVLGPSVGGSPEFMSAADKLIVEVNTATPSFEGLHDIDMPVLPPHRVPYPYTRVDERSGLDAVPVDPARVVALVESTERDKVGPNTPSDEGSRAIAGHLVEFFENEVRHGRLPANLLPLQSGIGNIANAVIEGLAGASFRNLTVWTEVLQDSFLDLFENGSLEFATATSIRLTEAGFEKFFANWDEYSSKLCLRSQVVSNSPEMIRRLGVIAMNTPVEVDIYAHANSTNVSGSRMLNGLGGSADFLRNAKLSIMHAPSARPSKTDPTGISTIVPMASHVDQTEHDLDVLVTDQGLADLRGLCPRERAREIIRQCAHPDYKPILTDYLDRAEHYAQRSRSMHEPHILQQALRFHTHLAEKGTMKVPSWD.

A CoA-binding site is contributed by 277–281; it reads GIGNI. Glu-302 serves as the catalytic 5-glutamyl coenzyme A thioester intermediate. Residues Asn-392 and Gly-396 each contribute to the CoA site.

It belongs to the acetyl-CoA hydrolase/transferase family.

The protein localises to the cytoplasm. It catalyses the reaction acetyl-CoA + H2O = acetate + CoA + H(+). Presumably involved in regulating the intracellular acetyl-CoA pool for fatty acid and cholesterol synthesis and fatty acid oxidation. In Eremothecium gossypii (strain ATCC 10895 / CBS 109.51 / FGSC 9923 / NRRL Y-1056) (Yeast), this protein is Acetyl-CoA hydrolase (ACH1).